The sequence spans 504 residues: Histidine ammonia-lyase (504 aa).

The 5-imidazolinone (Ala-Gly) cross-link spans 142–144; that stretch reads ASG. Ser-143 is modified (2,3-didehydroalanine (Ser)).

The protein belongs to the PAL/histidase family. Post-translationally, contains an active site 4-methylidene-imidazol-5-one (MIO), which is formed autocatalytically by cyclization and dehydration of residues Ala-Ser-Gly.

It is found in the cytoplasm. The catalysed reaction is L-histidine = trans-urocanate + NH4(+). It functions in the pathway amino-acid degradation; L-histidine degradation into L-glutamate; N-formimidoyl-L-glutamate from L-histidine: step 1/3. The polypeptide is Histidine ammonia-lyase (Staphylococcus aureus (strain MSSA476)).